Consider the following 60-residue polypeptide: uncharacterized protein (60 aa).

Residues Val-27 to Lys-50 are disordered. A compositionally biased stretch (low complexity) spans Asn-29–Asn-49.

This is an uncharacterized protein from Dictyostelium discoideum (Social amoeba).